We begin with the raw amino-acid sequence, 294 residues long: ATP synthase gamma chain (294 aa).

The protein belongs to the ATPase gamma chain family. As to quaternary structure, F-type ATPases have 2 components, CF(1) - the catalytic core - and CF(0) - the membrane proton channel. CF(1) has five subunits: alpha(3), beta(3), gamma(1), delta(1), epsilon(1). CF(0) has three main subunits: a, b and c.

It localises to the cell inner membrane. In terms of biological role, produces ATP from ADP in the presence of a proton gradient across the membrane. The gamma chain is believed to be important in regulating ATPase activity and the flow of protons through the CF(0) complex. This Paraburkholderia xenovorans (strain LB400) protein is ATP synthase gamma chain.